The chain runs to 153 residues: Large ribosomal subunit protein uL22 (153 aa).

This sequence belongs to the universal ribosomal protein uL22 family. In terms of assembly, part of the 50S ribosomal subunit.

Functionally, this protein binds specifically to 23S rRNA. It makes multiple contacts with different domains of the 23S rRNA in the assembled 50S subunit and ribosome. In terms of biological role, the globular domain of the protein is located near the polypeptide exit tunnel on the outside of the subunit, while an extended beta-hairpin is found that lines the wall of the exit tunnel in the center of the 70S ribosome. This Methanoculleus marisnigri (strain ATCC 35101 / DSM 1498 / JR1) protein is Large ribosomal subunit protein uL22.